Reading from the N-terminus, the 361-residue chain is Zygote arrest protein 1 (361 aa).

Disordered regions lie at residues 68-129 (GPRP…PRSW) and 142-252 (GLSS…EQDK). Residues 116–128 (PRSPARAGRPPRS) show a composition bias toward low complexity. Thr-155 carries the phosphothreonine modification. The segment covering 238–252 (ASRDRASPQSTEQDK) has biased composition (basic and acidic residues). A 3CxxC-type zinc finger spans residues 263 to 346 (KYGYYHCKDC…RQDLCGRCKD (84 aa)).

It belongs to the ZAR1 family. In terms of assembly, interacts with YBX2. In terms of processing, phosphorylation by CDK1 does not regulate formation of MARDO (mitochondria-associated ribonucleoprotein domain) membraneless compartment. Post-translationally, ubiquitinated and degradaded by the proteasome during oocyte meiotic maturation, leading to MARDO (mitochondria-associated ribonucleoprotein domain) membraneless compartment dissolution.

The protein resides in the cytoplasm. It is found in the cytoplasmic ribonucleoprotein granule. In terms of biological role, mRNA-binding protein that mediates formation of MARDO (mitochondria-associated ribonucleoprotein domain), a membraneless compartment that stores maternal mRNAs in oocytes. MARDO assembly around mitochondria is directed by an increase in mitochondrial membrane potential during oocyte growth. Promotes formation of MARDO phase-separated membraneless compartment by undergoing liquid-liquid phase separation upon binding to maternal mRNAs. Binds to the 3'-UTR of maternal mRNAs. Maternal mRNAs stored in the MARDO are translationally repressed. Essential for female fertility and oocyte-to-embryo transition by coordinating maternal mRNA storage, translation and degradation. This is Zygote arrest protein 1 from Rattus norvegicus (Rat).